The sequence spans 640 residues: MHVKKYLLKGLHRLQKGPGYTYKELLVWYCDNTNTHGPKRIICEGPKKKAMWFLLTLLFAALVCWQWGIFIRTYLSWEVSVSLSVGFKTMDFPAVTICNASPFKYSKIKHLLKDLDELMEAVLERILAPELSHANATRNLNFSIWNHTPLVLIDERNPHHPMVLDLFGDNHNGLTSSSASEKICNAHGCKMAMRLCSLNRTQCTFRNFTSATQALTEWYILQATNIFAQVPQQELVEMSYPGEQMILACLFGAEPCNYRNFTSIFYPHYGNCYIFNWGMTEKALPSANPGTEFGLKLILDIGQEDYVPFLASTAGVRLMLHEQRSYPFIRDEGIYAMSGTETSIGVLVDKLQRMGEPYSPCTVNGSEVPVQNFYSDYNTTYSIQACLRSCFQDHMIRNCNCGHYLYPLPRGEKYCNNRDFPDWAHCYSDLQMSVAQRETCIGMCKESCNDTQYKMTISMADWPSEASEDWIFHVLSQERDQSTNITLSRKGIVKLNIYFQEFNYRTIEESAANNIVWLLSNLGGQFGFWMGGSVLCLIEFGEIIIDFVWITIIKLVALAKSLRQRRAQASYAGPPPTVAELVEAHTNFGFQPDTAPRSPNTGPYPSEQALPIPGTPPPNYDSLRLQPLDVIESDSEGDAI.

Over 1–50 the chain is Cytoplasmic; it reads MHVKKYLLKGLHRLQKGPGYTYKELLVWYCDNTNTHGPKRIICEGPKKKA. A helical transmembrane segment spans residues 51-71; that stretch reads MWFLLTLLFAALVCWQWGIFI. The Extracellular portion of the chain corresponds to 72–532; sequence RTYLSWEVSV…GGQFGFWMGG (461 aa). Cystine bridges form between cysteine 98/cysteine 272, cysteine 184/cysteine 189, cysteine 196/cysteine 203, cysteine 249/cysteine 256, cysteine 361/cysteine 448, cysteine 386/cysteine 444, cysteine 390/cysteine 440, cysteine 399/cysteine 426, and cysteine 401/cysteine 415. A glycan (N-linked (GlcNAc...) asparagine) is linked at asparagine 260. The chain crosses the membrane as a helical span at residues 533 to 553; sequence SVLCLIEFGEIIIDFVWITII. Over 554 to 640 the chain is Cytoplasmic; the sequence is KLVALAKSLR…IESDSEGDAI (87 aa). Residues 590-640 form a disordered region; the sequence is FQPDTAPRSPNTGPYPSEQALPIPGTPPPNYDSLRLQPLDVIESDSEGDAI. The PY motif; recruits WW domain-containing proteins and is thereby required for ubiquitination and inhibition of the channel by NEDD4 and NEDD4L signature appears at 616–620; it reads PPPNY. Over residues 631-640 the composition is skewed to acidic residues; it reads IESDSEGDAI. Residues serine 633 and serine 635 each carry the phosphoserine modification.

This sequence belongs to the amiloride-sensitive sodium channel (TC 1.A.6) family. SCNN1B subfamily. As to quaternary structure, component of the heterotrimeric epithelial sodium channel (ENaC) composed of an alpha/SCNN1A, a beta/SCNN1B and a gamma/SCNN1G subunit. An additional delta/SCNN1D subunit can replace the alpha/SCNN1A subunit to form an alternative channel with specific properties. Interacts with WWP1 (via WW domains). Interacts with WWP2 (via WW domains); inhibits the channel. Interacts with the full-length immature form of PCSK9 (pro-PCSK9); inhibits ENaC by promoting its proteasomal degradation. Interacts (N-glycosylated) with BPIFA1; the interaction is direct and inhibits the proteolytic processing of SCNN1A and SCNN1G and the activation of ENaC. Post-translationally, ubiquitinated. Can be ubiquitinated at multiple sites and undergo monoubiquitination and polyubiquitination. Ubiquitination by NEDD4 or NEDD4L inhibits the ENaC channel through endocytosis, intracellular retention and degradation of its individual subunits. However, some studies could not confirm the ubiquitination of this subunit of the ENaC. In terms of processing, phosphorylated on serine and threonine residues. Aldosterone and insulin increase the basal level of phosphorylation. N-glycosylated. N-glycosylation is required for interaction with BPIFA1. In terms of tissue distribution, detected in placenta, lung and kidney. Expressed in kidney (at protein level).

The protein localises to the apical cell membrane. Its subcellular location is the cytoplasmic vesicle membrane. The enzyme catalyses Na(+)(in) = Na(+)(out). With respect to regulation, originally identified and characterized by its inhibition by the diuretic drug amiloride. Functionally, this is one of the three pore-forming subunits of the heterotrimeric epithelial sodium channel (ENaC), a critical regulator of sodium balance and fluid homeostasis. ENaC operates in epithelial tissues, where it mediates the electrodiffusion of sodium ions from extracellular fluid through the apical membrane of cells, with water following osmotically. It plays a key role in maintaining sodium homeostasis through electrogenic sodium reabsorption in the kidneys. Additionally, ENaC is essential for airway surface liquid homeostasis, which is crucial for proper mucus clearance. The protein is Epithelial sodium channel subunit beta of Homo sapiens (Human).